A 320-amino-acid polypeptide reads, in one-letter code: Tryptophan--tRNA ligase (320 aa).

Residues 8–10 (QPT) and 16–17 (GN) each bind ATP. The 'HIGH' region signature appears at 9 to 17 (PTGRPHWGN). Position 131 (Asp-131) interacts with L-tryptophan. ATP-binding positions include 143–145 (GVD), Val-182, and 189–193 (KMSKS). Residues 189–193 (KMSKS) carry the 'KMSKS' region motif.

The protein belongs to the class-I aminoacyl-tRNA synthetase family. Homodimer.

Its subcellular location is the cytoplasm. The enzyme catalyses tRNA(Trp) + L-tryptophan + ATP = L-tryptophyl-tRNA(Trp) + AMP + diphosphate + H(+). Functionally, catalyzes the attachment of tryptophan to tRNA(Trp). This chain is Tryptophan--tRNA ligase, found in Rhodopirellula baltica (strain DSM 10527 / NCIMB 13988 / SH1).